A 303-amino-acid chain; its full sequence is Nucleotide-binding protein SAB0719 (303 aa).

Residue 18-25 (GLSGAGKS) coordinates ATP. 69–72 (DLRG) is a binding site for GTP.

Belongs to the RapZ-like family.

Its function is as follows. Displays ATPase and GTPase activities. In Staphylococcus aureus (strain bovine RF122 / ET3-1), this protein is Nucleotide-binding protein SAB0719.